We begin with the raw amino-acid sequence, 146 residues long: Large ribosomal subunit protein bL19 (146 aa).

The segment at 116-146 (ADRKRIDQDRAAERAAKEEAQKAQEPKASQE) is disordered. Over residues 119-146 (KRIDQDRAAERAAKEEAQKAQEPKASQE) the composition is skewed to basic and acidic residues.

As to quaternary structure, part of the 50S risobomal subunit. Contacts protein L14. Forms a bridge to the 30S subunit in the 70S ribosome, contacting the 16S rRNA.

In terms of biological role, contacts the 16S rRNA of the 30S subunit (part of bridge B6), connecting the 2 subunits. This is Large ribosomal subunit protein bL19 (rplS) from Thermus thermophilus (strain ATCC 27634 / DSM 579 / HB8).